The sequence spans 541 residues: Cytochrome P450 67 (541 aa).

Cys-479 contributes to the heme binding site.

Belongs to the cytochrome P450 family. The cofactor is heme.

The protein is Cytochrome P450 67 (CYP67) of Uromyces fabae (Rust fungus).